Consider the following 592-residue polypeptide: Arginine--tRNA ligase (592 aa).

Positions 134–144 (ANPTGPLHVGH) match the 'HIGH' region motif.

This sequence belongs to the class-I aminoacyl-tRNA synthetase family. As to quaternary structure, monomer.

Its subcellular location is the cytoplasm. It carries out the reaction tRNA(Arg) + L-arginine + ATP = L-arginyl-tRNA(Arg) + AMP + diphosphate. This chain is Arginine--tRNA ligase, found in Coxiella burnetii (strain RSA 493 / Nine Mile phase I).